An 826-amino-acid polypeptide reads, in one-letter code: MSKAVISEKAEPRELKALYIVGPEIEPDPEILKLYDRKDCLVVGDGIDDADIYAIYLELKKHNVQIGPNTRIDIAAHGKRVDKKHYLRLSTEEVTETKKFLQQLQGSSPIDPIYVHLWSCYGGTANKDIAFLNPGSIIVTHVKSQYSSFGPADNFAHLHSITRYINEKNLTPHLQYLYDQLENYQATTFNQKESDGRIVKFKTTRTPEHDSMANIISNILEQKQSEELLKEFQNYLNKEAENFSKLFGEYLASEDKEKFQHYTSNISDKDLKNYVTGLLLNIANLSNKNNIKDKEKILTILNKIVNILGTSLLAVTVRNNNVELTKALLNKGADQHAKYTKIDMSLLYIACLNKSVDIAKLLLEYNVDPNYPTTDNDTPLLQACEKKSPELVKALLAKNADPNKVSDRGLSPLIVSCINPSEESREIALNLLANKNIKVNILGPNDFTPLILACYNNSERVVQALLDKEADVNAKDKDGFTPLFAAYRNHSTKITELLLEKGANPDVINPKTKSSILYNACNEGDLNIIKLLLKHKANPNLTTFDGTTPLMAACEKGDLEIAALLLKNGADINKSNNNGDNALFLACKNGNLELVKMLVENGVDLKKGSRGMIASSIAKKNGYEKVGAFLKAEIKSQRTLNTNQSNNPLPPKPPRLIKNTTTQNEENKKTWIKSEANLTLSQPHYNFLQSNSEAKSRALREINPLIEAAIKEVDKVNTVNVAVREEVQNILSKELLRIPINNLVDNKKGIINQITKELKLNNSQDNNNREYKISQQSLKEIGNKIFAAYGHKIQPQLTNTTTHRWQNYIKTTNNTNANKSNYLGKR.

ANK repeat units follow at residues 308 to 337, 342 to 371, 375 to 404, 445 to 474, 478 to 507, 512 to 541, 545 to 574, and 578 to 607; these read LGTSLLAVTVRNNNVELTKALLNKGADQHA, IDMSLLYIACLNKSVDIAKLLLEYNVDPNY, DNDTPLLQACEKKSPELVKALLAKNADPNK, NDFTPLILACYNNSERVVQALLDKEADVNA, DGFTPLFAAYRNHSTKITELLLEKGANPDV, TKSSILYNACNEGDLNIIKLLLKHKANPNL, DGTTPLMAACEKGDLEIAALLLKNGADINK, and NGDNALFLACKNGNLELVKMLVENGVDLKK.

This Rickettsia bellii (strain RML369-C) protein is Putative ankyrin repeat protein RBE_0220.